The following is a 498-amino-acid chain: Pup deamidase/depupylase (498 aa).

6 to 10 (GTEVE) is an ATP binding site. Positions 8 and 93 each coordinate Mg(2+). Asp95 serves as the catalytic Proton acceptor. Mg(2+) is bound at residue Glu100. 102-103 (SA) is an ATP binding site. A Mg(2+)-binding site is contributed by His156. ATP-binding residues include Asn158 and Arg240. His242 serves as a coordination point for Mg(2+).

The protein belongs to the Pup ligase/Pup deamidase family. Pup deamidase subfamily. It depends on ATP as a cofactor.

It carries out the reaction [prokaryotic ubiquitin-like protein]-C-terminal-L-glutamine + H2O = [prokaryotic ubiquitin-like protein]-C-terminal-L-glutamate + NH4(+). The protein operates within protein degradation; proteasomal Pup-dependent pathway. In terms of biological role, specifically catalyzes the deamidation of the C-terminal glutamine of the prokaryotic ubiquitin-like protein Pup to glutamate, thereby rendering Pup competent for conjugation. Probably also displays depupylase (DPUP) activity, removing conjugated Pup from target proteins; thus may be involved in the recycling of Pup and may function similarly to deubiquitinases (DUBs) in eukaryotes to prevent or promote proteasomal degradation of certain proteins. The protein is Pup deamidase/depupylase (dop) of Mycolicibacterium smegmatis (strain ATCC 700084 / mc(2)155) (Mycobacterium smegmatis).